A 145-amino-acid polypeptide reads, in one-letter code: Large ribosomal subunit protein uL15 (145 aa).

Residues 1-43 (MRLNTIKPGAGSKSAAKRVGRGIGSGLGKTCGRGHKGQKSRAG) form a disordered region. A compositionally biased stretch (gly residues) spans 21–31 (RGIGSGLGKTC).

Belongs to the universal ribosomal protein uL15 family. In terms of assembly, part of the 50S ribosomal subunit.

In terms of biological role, binds to the 23S rRNA. The chain is Large ribosomal subunit protein uL15 from Aromatoleum aromaticum (strain DSM 19018 / LMG 30748 / EbN1) (Azoarcus sp. (strain EbN1)).